Consider the following 1087-residue polypeptide: Period circadian protein (1087 aa).

Residues 1–14 are compositionally biased toward polar residues; that stretch reads MEGESTESTHNTKV. Disordered stretches follow at residues 1–98 and 123–153; these read MEGE…EQTE and GAPTPSDAHDAHGDKPQLDVDEQQDDPQAEQ. Residues 15 to 46 are compositionally biased toward low complexity; sequence SDSAYSNSCSNSQSQRSGSSKSRLSGSHSSGS. Residues 65–78 carry the Nuclear localization signal motif; that stretch reads KRNKDKSRKKKKAK. A compositionally biased stretch (basic residues) spans 65–78; the sequence is KRNKDKSRKKKKAK. The segment covering 79 to 93 has biased composition (low complexity); it reads SPAQATAATTTTIKS. The span at 129-140 shows a compositional bias: basic and acidic residues; the sequence is DAHDAHGDKPQL. The span at 141-150 shows a compositional bias: acidic residues; that stretch reads DVDEQQDDPQ. PAS domains follow at residues 220-355 and 373-479; these read DSFC…ATPI and FAIQ…RVFQ. Disordered regions lie at residues 613–692, 736–759, 871–893, and 956–1087; these read PVTA…NPLP, MPEYSGPGHGQTMKRGGSHSWEGD, SSASAAQHSPKSSENPSTSQPEA, and TTTQ…HGDG. Residues 655–664 are compositionally biased toward polar residues; that stretch reads NLTTASNVRM. A compositionally biased stretch (low complexity) spans 665-689; it reads SSVTNTSNTGTGTSGGENSASGSSN. 2 stretches are compositionally biased toward polar residues: residues 877-892 and 1003-1024; these read QHSPKSSENPSTSQPE and LPSTSARRGSSSDQRNNSNNPK. The segment covering 1028-1047 has biased composition (low complexity); sequence DSNGNSDDMDGSSFSSFYSS. A compositionally biased stretch (basic and acidic residues) spans 1060–1087; that stretch reads DNEKETKVHKLKPIVEHPEEDQTQHGDG.

Forms a heterodimer with timeless (TIM); the complex then translocates into the nucleus. Post-translationally, phosphorylated with a circadian rhythmicity, probably by the double-time protein (dbt). Phosphorylation could be implicated in the stability of per monomer and in the formation of heterodimer per-tim.

It is found in the nucleus. The protein localises to the cytoplasm. The protein resides in the perinuclear region. In terms of biological role, essential for biological clock functions. Determines the period length of circadian and ultradian rhythms; an increase in PER dosage leads to shortened circadian rhythms and a decrease leads to lengthened circadian rhythms. Essential for the circadian rhythmicity of locomotor activity, eclosion behavior, and for the rhythmic component of the male courtship song that originates in the thoracic nervous system. The biological cycle depends on the rhythmic formation and nuclear localization of the TIM-PER complex. Light induces the degradation of TIM, which promotes elimination of PER. Nuclear activity of the heterodimer coordinatively regulates PER and TIM transcription through a negative feedback loop. Behaves as a negative element in circadian transcriptional loop. Does not appear to bind DNA, suggesting indirect transcriptional inhibition. This Drosophila virilis (Fruit fly) protein is Period circadian protein (per).